The chain runs to 293 residues: Exosome complex component RRP4 (293 aa).

In terms of domain architecture, S1 motif spans 79–159 (EVGDIVVGRI…SDGAVSLHTR (81 aa)). Serine 124 is modified (phosphoserine).

This sequence belongs to the RRP4 family. As to quaternary structure, component of the RNA exosome core complex (Exo-9), composed of EXOSC1, EXOSC2, EXOSC3, EXOSC4, EXOSC5, EXOSC6, EXOSC7, EXOSC8 and EXOSC9; within the complex interacts with EXOSC4 and EXOSC7. The catalytically inactive RNA exosome core complex (Exo-9) associates with the catalytic subunit EXOSC10/RRP6. Exo-9 may associate with DIS3 to form the nucleolar exosome complex, or DIS3L to form the cytoplasmic exosome complex. Exo-9 is formed by a hexameric base ring consisting of the heterodimers EXOSC4-EXOSC9, EXOSC5-EXOSC8 and EXOSC6-EXOSC7, and a cap ring consisting of EXOSC1, EXOSC2 and EXOSC3. The RNA exosome complex associates with cofactors C1D/RRP47, MPHOSPH6/MPP6 and MTREX/MTR4. Interacts with GTPBP1. Interacts with ZFP36L1 (via N-terminus).

The protein resides in the cytoplasm. It localises to the nucleus. Its subcellular location is the nucleolus. Non-catalytic component of the RNA exosome complex which has 3'-&gt;5' exoribonuclease activity and participates in a multitude of cellular RNA processing and degradation events. In the nucleus, the RNA exosome complex is involved in proper maturation of stable RNA species such as rRNA, snRNA and snoRNA, in the elimination of RNA processing by-products and non-coding 'pervasive' transcripts, such as antisense RNA species and promoter-upstream transcripts (PROMPTs), and of mRNAs with processing defects, thereby limiting or excluding their export to the cytoplasm. The RNA exosome may be involved in Ig class switch recombination (CSR) and/or Ig variable region somatic hypermutation (SHM) by targeting AICDA deamination activity to transcribed dsDNA substrates. In the cytoplasm, the RNA exosome complex is involved in general mRNA turnover and specifically degrades inherently unstable mRNAs containing AU-rich elements (AREs) within their 3' untranslated regions, and in RNA surveillance pathways, preventing translation of aberrant mRNAs. It seems to be involved in degradation of histone mRNA. The catalytic inactive RNA exosome core complex of 9 subunits (Exo-9) is proposed to play a pivotal role in the binding and presentation of RNA for ribonucleolysis, and to serve as a scaffold for the association with catalytic subunits and accessory proteins or complexes. EXOSC2 as peripheral part of the Exo-9 complex stabilizes the hexameric ring of RNase PH-domain subunits through contacts with EXOSC4 and EXOSC7. This is Exosome complex component RRP4 (EXOSC2) from Bos taurus (Bovine).